We begin with the raw amino-acid sequence, 116 residues long: Large ribosomal subunit protein bL20 (116 aa).

This sequence belongs to the bacterial ribosomal protein bL20 family.

Binds directly to 23S ribosomal RNA and is necessary for the in vitro assembly process of the 50S ribosomal subunit. It is not involved in the protein synthesizing functions of that subunit. The polypeptide is Large ribosomal subunit protein bL20 (Helicobacter pylori (strain HPAG1)).